Here is a 201-residue protein sequence, read N- to C-terminus: Glutathione S-transferase (201 aa).

Residues 1–81 form the GST N-terminal domain; that stretch reads MKLYYKVGAC…YIGDHSDVAA (81 aa). Glutathione contacts are provided by residues Cys10, Lys35, Val52, 65-66, and 102-105; these read QN and SDLH. Residues 87 to 201 enclose the GST C-terminal domain; that stretch reads GSIERARLQE…QKAFKEEGLN (115 aa).

The protein belongs to the GST superfamily. Beta family. As to quaternary structure, homodimer.

The protein resides in the cytoplasm. It carries out the reaction RX + glutathione = an S-substituted glutathione + a halide anion + H(+). In terms of biological role, conjugation of reduced glutathione to a wide number of exogenous and endogenous hydrophobic electrophiles. The polypeptide is Glutathione S-transferase (gst) (Brucella anthropi (Ochrobactrum anthropi)).